Consider the following 447-residue polypeptide: ATP-dependent protease ATPase subunit HslU (447 aa).

Residues Ile-18, 60-65, Asp-259, Glu-325, and Arg-397 contribute to the ATP site; that span reads GVGKTE.

It belongs to the ClpX chaperone family. HslU subfamily. A double ring-shaped homohexamer of HslV is capped on each side by a ring-shaped HslU homohexamer. The assembly of the HslU/HslV complex is dependent on binding of ATP.

The protein localises to the cytoplasm. Its function is as follows. ATPase subunit of a proteasome-like degradation complex; this subunit has chaperone activity. The binding of ATP and its subsequent hydrolysis by HslU are essential for unfolding of protein substrates subsequently hydrolyzed by HslV. HslU recognizes the N-terminal part of its protein substrates and unfolds these before they are guided to HslV for hydrolysis. In Burkholderia pseudomallei (strain K96243), this protein is ATP-dependent protease ATPase subunit HslU.